The chain runs to 152 residues: Plant UBX domain-containing protein 12 (152 aa).

Residues 32-61 (KRFSEEESEETENTTNSSNAVFGFPNLPEE) are disordered. One can recognise a UBX domain in the interval 67-150 (DQSVLCRICV…GLANSLVSVT (84 aa)).

This chain is Plant UBX domain-containing protein 12, found in Arabidopsis thaliana (Mouse-ear cress).